Reading from the N-terminus, the 1101-residue chain is Lysylphosphatidylglycerol biosynthesis bifunctional protein LysX (1101 aa).

The tract at residues 1–601 is phosphatidylglycerol lysyltransferase; it reads MTATRLVRAH…RLHSDGTAPD (601 aa). 7 helical membrane-spanning segments follow: residues 18–38, 60–80, 84–104, 113–133, 151–171, 183–200, and 207–227; these read VPAA…LASV, FPDT…ALAA, IAWW…VTGL, DVGE…LLLA, VTLV…LELF, YALN…GAFS, and VNAL…VVLF. Residues 602-1101 form a lysine--tRNA ligase region; it reads RIGPVGDGAD…TLPFPLAKPR (500 aa). Residues 662–740 constitute a DNA-binding region (OB); sequence VTVSGRVLRA…SVLVTRWRLI (79 aa). Mg(2+) is bound by residues Asp-1013 and Glu-1020.

In the N-terminal section; belongs to the LPG synthetase family. The protein in the C-terminal section; belongs to the class-II aminoacyl-tRNA synthetase family. Mg(2+) serves as cofactor.

The protein localises to the cell membrane. It carries out the reaction tRNA(Lys) + L-lysine + ATP = L-lysyl-tRNA(Lys) + AMP + diphosphate. The catalysed reaction is L-lysyl-tRNA(Lys) + a 1,2-diacyl-sn-glycero-3-phospho-(1'-sn-glycerol) = a 1,2-diacyl-sn-glycero-3-phospho-1'-(3'-O-L-lysyl)-sn-glycerol + tRNA(Lys). Catalyzes the production of L-lysyl-tRNA(Lys)transfer and the transfer of a lysyl group from L-lysyl-tRNA(Lys) to membrane-bound phosphatidylglycerol (PG), which produces lysylphosphatidylglycerol (LPG), one of the components of the bacterial membrane with a positive net charge. LPG synthesis contributes to the resistance to cationic antimicrobial peptides (CAMPs) and likely protects M.tuberculosis against the CAMPs produced by competiting microorganisms (bacteriocins). In fact, the modification of anionic phosphatidylglycerol with positively charged L-lysine results in repulsion of the peptides. The polypeptide is Lysylphosphatidylglycerol biosynthesis bifunctional protein LysX (lysX) (Mycolicibacterium gilvum (strain PYR-GCK) (Mycobacterium gilvum (strain PYR-GCK))).